We begin with the raw amino-acid sequence, 990 residues long: Glycine dehydrogenase (decarboxylating) (990 aa).

Lys-726 carries the N6-(pyridoxal phosphate)lysine modification.

Belongs to the GcvP family. As to quaternary structure, the glycine cleavage system is composed of four proteins: P, T, L and H. Pyridoxal 5'-phosphate serves as cofactor.

The enzyme catalyses N(6)-[(R)-lipoyl]-L-lysyl-[glycine-cleavage complex H protein] + glycine + H(+) = N(6)-[(R)-S(8)-aminomethyldihydrolipoyl]-L-lysyl-[glycine-cleavage complex H protein] + CO2. Functionally, the glycine cleavage system catalyzes the degradation of glycine. The P protein binds the alpha-amino group of glycine through its pyridoxal phosphate cofactor; CO(2) is released and the remaining methylamine moiety is then transferred to the lipoamide cofactor of the H protein. This is Glycine dehydrogenase (decarboxylating) from Rhodopseudomonas palustris (strain ATCC BAA-98 / CGA009).